The primary structure comprises 500 residues: Cytochrome P450 2D16 (500 aa).

A Phosphoserine modification is found at Ser249. Residue Cys446 coordinates heme.

The protein belongs to the cytochrome P450 family. It depends on heme as a cofactor. In terms of tissue distribution, expressed at high levels in the inner zone of the adrenal cortex.

It localises to the endoplasmic reticulum membrane. It is found in the microsome membrane. It carries out the reaction an organic molecule + reduced [NADPH--hemoprotein reductase] + O2 = an alcohol + oxidized [NADPH--hemoprotein reductase] + H2O + H(+). Functionally, cytochromes P450 are a group of heme-thiolate monooxygenases. In liver microsomes, this enzyme is involved in an NADPH-dependent electron transport pathway. It oxidizes a variety of structurally unrelated compounds, including steroids, fatty acids, and xenobiotics. In Cavia porcellus (Guinea pig), this protein is Cytochrome P450 2D16 (CYP2D16).